A 388-amino-acid chain; its full sequence is Large ribosomal subunit protein uL3B (388 aa).

A compositionally biased stretch (basic and acidic residues) spans 1-10; the sequence is MSHCKFEQPR. Positions 1 to 34 are disordered; it reads MSHCKFEQPRHGSLGFLPRKRASRQRGKVKAFPK. Positions 18-31 are enriched in basic residues; that stretch reads PRKRASRQRGKVKA.

Belongs to the universal ribosomal protein uL3 family. As to quaternary structure, component of the large ribosomal subunit (LSU). Mature yeast ribosomes consist of a small (40S) and a large (60S) subunit. The 40S small subunit contains 1 molecule of ribosomal RNA (18S rRNA) and at least 33 different proteins. The large 60S subunit contains 3 rRNA molecules (25S, 5.8S and 5S rRNA) and at least 46 different proteins. uL3 forms together with ES39L one of the contact sites for the signal recognition particle that targets ribosomes to the endoplasmic reticulum membrane.

The protein resides in the cytoplasm. Its function is as follows. Component of the ribosome, a large ribonucleoprotein complex responsible for the synthesis of proteins in the cell. The small ribosomal subunit (SSU) binds messenger RNAs (mRNAs) and translates the encoded message by selecting cognate aminoacyl-transfer RNA (tRNA) molecules. The large subunit (LSU) contains the ribosomal catalytic site termed the peptidyl transferase center (PTC), which catalyzes the formation of peptide bonds, thereby polymerizing the amino acids delivered by tRNAs into a polypeptide chain. The nascent polypeptides leave the ribosome through a tunnel in the LSU and interact with protein factors that function in enzymatic processing, targeting, and the membrane insertion of nascent chains at the exit of the ribosomal tunnel. uL3 plays a role in coordinating processes of accommodating the aminoacyl-tRNA in the PTC. The polypeptide is Large ribosomal subunit protein uL3B (rpl302) (Schizosaccharomyces pombe (strain 972 / ATCC 24843) (Fission yeast)).